Here is a 120-residue protein sequence, read N- to C-terminus: Non-specific lipid-transfer protein 6 (120 aa).

The N-terminal stretch at 1–26 is a signal peptide; the sequence is MARSMSLKLACVVVLCLLVDAPLAQG. Intrachain disulfides connect Cys-57–Cys-102 and Cys-77–Cys-116.

Belongs to the plant LTP family. As to expression, specifically expressed in fiber cells.

Its function is as follows. Plant non-specific lipid-transfer proteins transfer phospholipids as well as galactolipids across membranes. May play a role in wax or cutin deposition in the cell walls of expanding epidermal cells and certain secretory tissues. The protein is Non-specific lipid-transfer protein 6 (LTP6) of Gossypium hirsutum (Upland cotton).